The chain runs to 826 residues: Zinc phosphodiesterase ELAC protein 2 (826 aa).

The transit peptide at 1–16 directs the protein to the mitochondrion; sequence MWALCSLLRSATGRTM. The span at 15-27 shows a compositional bias: polar residues; the sequence is TMSQGRTISQGSA. Disordered stretches follow at residues 15–53 and 187–231; these read TMSQ…GSSG and SEQR…VSQR. Residues Ser199, Ser208, Ser212, Ser229, Ser618, and Ser736 each carry the phosphoserine modification. A compositionally biased stretch (basic and acidic residues) spans 208–224; that stretch reads SPERSSDSESNESEPHL. Residues 798–826 form a disordered region; sequence ALTDDLEDGEPQQKRAHTEEPQSKKVRAQ. Residues 808-820 are compositionally biased toward basic and acidic residues; sequence PQQKRAHTEEPQS.

The protein belongs to the RNase Z family. As to quaternary structure, homodimer. Interacts with PTCD1. Requires Zn(2+) as cofactor.

It is found in the mitochondrion. It localises to the mitochondrion matrix. The protein resides in the mitochondrion nucleoid. The protein localises to the nucleus. The catalysed reaction is Endonucleolytic cleavage of RNA, removing extra 3' nucleotides from tRNA precursor, generating 3' termini of tRNAs. A 3'-hydroxy group is left at the tRNA terminus and a 5'-phosphoryl group is left at the trailer molecule.. Its function is as follows. Zinc phosphodiesterase, which displays mitochondrial tRNA 3'-processing endonuclease activity. Involved in tRNA maturation, by removing a 3'-trailer from precursor tRNA. Associates with mitochondrial DNA complexes at the nucleoids to initiate RNA processing and ribosome assembly. This chain is Zinc phosphodiesterase ELAC protein 2 (ELAC2), found in Macaca fascicularis (Crab-eating macaque).